A 125-amino-acid polypeptide reads, in one-letter code: Large ribosomal subunit protein bL12 (125 aa).

Belongs to the bacterial ribosomal protein bL12 family. Homodimer. Part of the ribosomal stalk of the 50S ribosomal subunit. Forms a multimeric L10(L12)X complex, where L10 forms an elongated spine to which 2 to 4 L12 dimers bind in a sequential fashion. Binds GTP-bound translation factors.

Functionally, forms part of the ribosomal stalk which helps the ribosome interact with GTP-bound translation factors. Is thus essential for accurate translation. This is Large ribosomal subunit protein bL12 from Rickettsia africae (strain ESF-5).